A 198-amino-acid polypeptide reads, in one-letter code: Phosphoheptose isomerase (198 aa).

Residues 34-196 (IVEALIRGNK…DDSLFPADHG (163 aa)) enclose the SIS domain. 49-51 (NGG) is a substrate binding site. 2 residues coordinate Zn(2+): His-58 and Asn-62. Substrate-binding positions include Asn-62, 91–92 (ND), 117–119 (STS), Ser-122, and Gln-172. Residues Gln-172 and His-180 each coordinate Zn(2+).

It belongs to the SIS family. GmhA subfamily. In terms of assembly, homotetramer. The cofactor is Zn(2+).

It localises to the cytoplasm. It carries out the reaction 2 D-sedoheptulose 7-phosphate = D-glycero-alpha-D-manno-heptose 7-phosphate + D-glycero-beta-D-manno-heptose 7-phosphate. Its pathway is carbohydrate biosynthesis; D-glycero-D-manno-heptose 7-phosphate biosynthesis; D-glycero-alpha-D-manno-heptose 7-phosphate and D-glycero-beta-D-manno-heptose 7-phosphate from sedoheptulose 7-phosphate: step 1/1. Its function is as follows. Catalyzes the isomerization of sedoheptulose 7-phosphate in D-glycero-D-manno-heptose 7-phosphate. The sequence is that of Phosphoheptose isomerase from Alteromonas mediterranea (strain DSM 17117 / CIP 110805 / LMG 28347 / Deep ecotype).